A 754-amino-acid chain; its full sequence is Subtilisin-like protease SBT3.12 (754 aa).

Residues 1 to 28 (MGIVKGRSRAGLFIGFLFIVNVGFCVFA) form the signal peptide. The propeptide at 29 to 117 (QESSNEERKI…VAPNRKVELQ (89 aa)) is activation peptide. In terms of domain architecture, Inhibitor I9 spans 39-116 (YVVHLGVRRH…SVAPNRKVEL (78 aa)). The 486-residue stretch at 121-606 (IYDYLGLSPS…AGLVNAERAK (486 aa)) folds into the Peptidase S8 domain. Residue aspartate 151 is the Charge relay system of the active site. Asparagine 206 carries an N-linked (GlcNAc...) asparagine glycan. The Charge relay system role is filled by histidine 224. N-linked (GlcNAc...) asparagine glycans are attached at residues asparagine 239 and asparagine 369. Serine 537 functions as the Charge relay system in the catalytic mechanism. N-linked (GlcNAc...) asparagine glycans are attached at residues asparagine 629 and asparagine 740.

The protein belongs to the peptidase S8 family.

It is found in the secreted. In Arabidopsis thaliana (Mouse-ear cress), this protein is Subtilisin-like protease SBT3.12.